A 245-amino-acid chain; its full sequence is Membrane-spanning 4-domains subfamily A member 15 (245 aa).

Residues 1-30 (MWERRGRGESAAGTAAVASRNASGLRPPPA) are disordered. 4 helical membrane passes run 78–98 (GTVQ…LLMV), 103–123 (LGML…FIIS), 147–167 (ILSA…FGVT), and 176–196 (LAVL…ATHF).

The protein belongs to the MS4A family.

The protein resides in the membrane. May be involved in signal transduction as a component of a multimeric receptor complex. The chain is Membrane-spanning 4-domains subfamily A member 15 (Ms4a15) from Mus musculus (Mouse).